The primary structure comprises 520 residues: GMP synthase [glutamine-hydrolyzing] (520 aa).

Positions 12–205 (KIIVLDYGSQ…AISICGARGD (194 aa)) constitute a Glutamine amidotransferase type-1 domain. The active-site Nucleophile is the C89. Residues H179 and E181 contribute to the active site. The 190-residue stretch at 206–395 (WSMDNFIDME…LGMPEEIVWR (190 aa)) folds into the GMPS ATP-PPase domain. 233-239 (SGGVDSS) serves as a coordination point for ATP.

As to quaternary structure, homodimer.

The catalysed reaction is XMP + L-glutamine + ATP + H2O = GMP + L-glutamate + AMP + diphosphate + 2 H(+). Its pathway is purine metabolism; GMP biosynthesis; GMP from XMP (L-Gln route): step 1/1. Its function is as follows. Catalyzes the synthesis of GMP from XMP. The polypeptide is GMP synthase [glutamine-hydrolyzing] (Streptococcus pyogenes serotype M1).